The sequence spans 538 residues: NADH-quinone oxidoreductase subunit N (538 aa).

14 consecutive transmembrane segments (helical) span residues 12-32, 47-67, 81-101, 144-164, 170-190, 205-225, 248-268, 294-314, 317-337, 343-363, 371-391, 423-443, 472-492, and 502-522; these read IAYGALSPMLIMFGVAVVSVL, LALATVGILGAFVAVVALSGS, PTLYLQGLILVASGLALVVMA, GITQTEIFPLTLFAIAGMMLF, LLTMFVALEVFSLPLYVMCAL, YFLLGAFSSAFFLFGSAFVYG, FLLLGVAMLSVGLLFKVGAVP, IAAFGALLRVLYVALPGITTD, PVLWGVAIATMLIGSIGAVTQ, MLAYSAVAHTGFLLTGVAAAN, LFYLAAYGFSTVGAFIIAGLV, APVLGIVFALFLLAFAGIPLT, SAIAAYFYVRVIVVMFFADPV, and GPAVTVSIAVSALITVLLGVA.

This sequence belongs to the complex I subunit 2 family. NDH-1 is composed of 14 different subunits. Subunits NuoA, H, J, K, L, M, N constitute the membrane sector of the complex.

It localises to the cell membrane. It carries out the reaction a quinone + NADH + 5 H(+)(in) = a quinol + NAD(+) + 4 H(+)(out). Functionally, NDH-1 shuttles electrons from NADH, via FMN and iron-sulfur (Fe-S) centers, to quinones in the respiratory chain. The immediate electron acceptor for the enzyme in this species is believed to be a menaquinone. Couples the redox reaction to proton translocation (for every two electrons transferred, four hydrogen ions are translocated across the cytoplasmic membrane), and thus conserves the redox energy in a proton gradient. This is NADH-quinone oxidoreductase subunit N from Mycobacteroides abscessus (strain ATCC 19977 / DSM 44196 / CCUG 20993 / CIP 104536 / JCM 13569 / NCTC 13031 / TMC 1543 / L948) (Mycobacterium abscessus).